We begin with the raw amino-acid sequence, 229 residues long: ATP synthase subunit a (229 aa).

A run of 6 helical transmembrane segments spans residues 25-45 (ADAVVYTWLIMIGLVVLSIAA), 82-102 (FFPLVATLALFILVSNLIGLI), 104-124 (GFFPPTANINTTAACAVVVFV), 142-162 (FLGPIAWLAPMMFFIEVIGHL), 181-201 (LVLIIFFGLAPFVVPLPMMLM), and 202-222 (GVLVSFIQAFVFMLLAMIYIQ).

The protein belongs to the ATPase A chain family. F-type ATPases have 2 components, CF(1) - the catalytic core - and CF(0) - the membrane proton channel. CF(1) has five subunits: alpha(3), beta(3), gamma(1), delta(1), epsilon(1). CF(0) has three main subunits: a(1), b(2) and c(9-12). The alpha and beta chains form an alternating ring which encloses part of the gamma chain. CF(1) is attached to CF(0) by a central stalk formed by the gamma and epsilon chains, while a peripheral stalk is formed by the delta and b chains.

The protein resides in the cell inner membrane. In terms of biological role, key component of the proton channel; it plays a direct role in the translocation of protons across the membrane. This chain is ATP synthase subunit a, found in Geobacter sp. (strain M21).